A 208-amino-acid chain; its full sequence is Protein-L-isoaspartate O-methyltransferase (208 aa).

Residue S59 is part of the active site.

This sequence belongs to the methyltransferase superfamily. L-isoaspartyl/D-aspartyl protein methyltransferase family.

The protein resides in the cytoplasm. The catalysed reaction is [protein]-L-isoaspartate + S-adenosyl-L-methionine = [protein]-L-isoaspartate alpha-methyl ester + S-adenosyl-L-homocysteine. Its function is as follows. Catalyzes the methyl esterification of L-isoaspartyl residues in peptides and proteins that result from spontaneous decomposition of normal L-aspartyl and L-asparaginyl residues. It plays a role in the repair and/or degradation of damaged proteins. The polypeptide is Protein-L-isoaspartate O-methyltransferase (Escherichia coli (strain K12 / MC4100 / BW2952)).